The following is a 185-amino-acid chain: Probable chorismate pyruvate-lyase 1 (185 aa).

Substrate is bound by residues arginine 70, leucine 108, and glutamate 166.

The protein belongs to the UbiC family.

The protein resides in the cytoplasm. It carries out the reaction chorismate = 4-hydroxybenzoate + pyruvate. The protein operates within cofactor biosynthesis; ubiquinone biosynthesis. In terms of biological role, removes the pyruvyl group from chorismate, with concomitant aromatization of the ring, to provide 4-hydroxybenzoate (4HB) for the ubiquinone pathway. The polypeptide is Probable chorismate pyruvate-lyase 1 (Pseudomonas fluorescens (strain Pf0-1)).